The chain runs to 300 residues: MESPESFSTMFMKPIRHILSEKKSRKIALFLLINTAYMVVEFVAGFMSNSLGLISDACHMLFDCAALAIGLYASYISRLPANHQYNYGRGRFEVLSGYVNAVFLVLVGALIVLESIERILDPQEISTNSLLVVSVGGLLVNIVGLIFFHEEHHHAHGGSGIFLHVLADTMGSVGVVISTLLIKYKGWLVADPASSIFISILIIASVIPLLRNSAEILLQRVPRAHRQDLKEAMRNILKTKGVCSIQRLHVWSFTNSDVVATLHLLVSADSDKTDTKLQVSRLLEDAGVKDWTLQVESVNS.

Residues 1–26 lie on the Cytoplasmic side of the membrane; that stretch reads MESPESFSTMFMKPIRHILSEKKSRK. Residues 27-47 traverse the membrane as a helical segment; sequence IALFLLINTAYMVVEFVAGFM. The Vacuolar segment spans residues 48–50; it reads SNS. A helical membrane pass occupies residues 51 to 71; the sequence is LGLISDACHMLFDCAALAIGL. The Cytoplasmic segment spans residues 72 to 91; the sequence is YASYISRLPANHQYNYGRGR. Residues 92–112 traverse the membrane as a helical segment; that stretch reads FEVLSGYVNAVFLVLVGALIV. The Vacuolar portion of the chain corresponds to 113-128; it reads LESIERILDPQEISTN. A helical membrane pass occupies residues 129-149; the sequence is SLLVVSVGGLLVNIVGLIFFH. The Cytoplasmic portion of the chain corresponds to 150–160; sequence EEHHHAHGGSG. A helical membrane pass occupies residues 161–181; it reads IFLHVLADTMGSVGVVISTLL. At 182 to 186 the chain is on the vacuolar side; the sequence is IKYKG. The chain crosses the membrane as a helical span at residues 187–207; the sequence is WLVADPASSIFISILIIASVI. Topologically, residues 208–300 are cytoplasmic; it reads PLLRNSAEIL…WTLQVESVNS (93 aa).

This sequence belongs to the cation diffusion facilitator (CDF) transporter (TC 2.A.4) family. SLC30A subfamily.

The protein resides in the vacuole membrane. Its function is as follows. Involved in sequestration of excess metal in the cytoplasm into vacuoles to maintain metal homeostasis. The chain is Metal tolerance protein 12 (MTP12) from Arabidopsis thaliana (Mouse-ear cress).